We begin with the raw amino-acid sequence, 181 residues long: NADH-quinone oxidoreductase subunit B 2 (181 aa).

[4Fe-4S] cluster is bound by residues cysteine 44, cysteine 45, cysteine 110, and cysteine 139.

It belongs to the complex I 20 kDa subunit family. As to quaternary structure, NDH-1 is composed of 14 different subunits. Subunits NuoB, C, D, E, F, and G constitute the peripheral sector of the complex. Requires [4Fe-4S] cluster as cofactor.

It localises to the cell inner membrane. The catalysed reaction is a quinone + NADH + 5 H(+)(in) = a quinol + NAD(+) + 4 H(+)(out). In terms of biological role, NDH-1 shuttles electrons from NADH, via FMN and iron-sulfur (Fe-S) centers, to quinones in the respiratory chain. The immediate electron acceptor for the enzyme in this species is believed to be a menaquinone. Couples the redox reaction to proton translocation (for every two electrons transferred, four hydrogen ions are translocated across the cytoplasmic membrane), and thus conserves the redox energy in a proton gradient. The polypeptide is NADH-quinone oxidoreductase subunit B 2 (Cytophaga hutchinsonii (strain ATCC 33406 / DSM 1761 / CIP 103989 / NBRC 15051 / NCIMB 9469 / D465)).